The following is a 364-amino-acid chain: Capsular polysaccharide phosphotransferase cps1A (364 aa).

Belongs to the stealth family.

Functionally, part of a capsular polysaccharide synthesis locus. This is Capsular polysaccharide phosphotransferase cps1A (cps1A) from Actinobacillus pleuropneumoniae (Haemophilus pleuropneumoniae).